Here is a 550-residue protein sequence, read N- to C-terminus: Dihydroxy-acid dehydratase (550 aa).

Residue D81 coordinates Mg(2+). C122 lines the [2Fe-2S] cluster pocket. Residues D123 and K124 each coordinate Mg(2+). The residue at position 124 (K124) is an N6-carboxylysine. A [2Fe-2S] cluster-binding site is contributed by C194. E442 serves as a coordination point for Mg(2+). S467 acts as the Proton acceptor in catalysis.

It belongs to the IlvD/Edd family. In terms of assembly, homodimer. The cofactor is [2Fe-2S] cluster. Requires Mg(2+) as cofactor.

The enzyme catalyses (2R)-2,3-dihydroxy-3-methylbutanoate = 3-methyl-2-oxobutanoate + H2O. The catalysed reaction is (2R,3R)-2,3-dihydroxy-3-methylpentanoate = (S)-3-methyl-2-oxopentanoate + H2O. It participates in amino-acid biosynthesis; L-isoleucine biosynthesis; L-isoleucine from 2-oxobutanoate: step 3/4. Its pathway is amino-acid biosynthesis; L-valine biosynthesis; L-valine from pyruvate: step 3/4. In terms of biological role, functions in the biosynthesis of branched-chain amino acids. Catalyzes the dehydration of (2R,3R)-2,3-dihydroxy-3-methylpentanoate (2,3-dihydroxy-3-methylvalerate) into 2-oxo-3-methylpentanoate (2-oxo-3-methylvalerate) and of (2R)-2,3-dihydroxy-3-methylbutanoate (2,3-dihydroxyisovalerate) into 2-oxo-3-methylbutanoate (2-oxoisovalerate), the penultimate precursor to L-isoleucine and L-valine, respectively. This Methanoregula boonei (strain DSM 21154 / JCM 14090 / 6A8) protein is Dihydroxy-acid dehydratase.